A 262-amino-acid polypeptide reads, in one-letter code: Indole-3-glycerol phosphate synthase (262 aa).

It belongs to the TrpC family.

It catalyses the reaction 1-(2-carboxyphenylamino)-1-deoxy-D-ribulose 5-phosphate + H(+) = (1S,2R)-1-C-(indol-3-yl)glycerol 3-phosphate + CO2 + H2O. Its pathway is amino-acid biosynthesis; L-tryptophan biosynthesis; L-tryptophan from chorismate: step 4/5. The protein is Indole-3-glycerol phosphate synthase of Clostridium acetobutylicum (strain ATCC 824 / DSM 792 / JCM 1419 / IAM 19013 / LMG 5710 / NBRC 13948 / NRRL B-527 / VKM B-1787 / 2291 / W).